The primary structure comprises 339 residues: RxLR effector protein SFI4 (339 aa).

Positions 1 to 24 (MRVLRVTFLWALLLLVAFSASVYA) are cleaved as a signal peptide. Residues 51 to 74 (RGLRNSGMKLNDAKDFKGAIAKLR) carry the RxLR-dEER motif. 4 TPR repeats span residues 106 to 139 (AQIL…VEKI), 190 to 223 (IEAS…QNGE), 232 to 265 (AELY…FRQR), and 274 to 307 (AFSL…AVQI).

This sequence belongs to the RxLR effector family.

Its subcellular location is the secreted. The protein resides in the host nucleus. It localises to the host cytoplasm. Effector that suppresses flg22-induced post-translational MAP kinase activation in tomato but not in Arabidopsis. The perception of highly conserved pathogen- or microbe-associated molecular patterns (PAMPs/MAMPs), such as flg22, triggers converging signaling pathways recruiting MAP kinase cascades and inducing transcriptional re-programming, yielding a generic antimicrobial response. The sequence is that of RxLR effector protein SFI4 from Phytophthora infestans (strain T30-4) (Potato late blight agent).